The chain runs to 303 residues: GTPase Era (303 aa).

In terms of domain architecture, Era-type G spans 8-176 (YCGFIAIVGR…ASIVRKHMPE (169 aa)). Positions 16 to 23 (GRPNVGKS) are G1. GTP is bound at residue 16–23 (GRPNVGKS). The G2 stretch occupies residues 42–46 (QTTRH). A G3 region spans residues 63–66 (DTPG). GTP is bound by residues 63–67 (DTPGL) and 125–128 (NKVD). Positions 125–128 (NKVD) are G4. Residues 155–157 (ISA) form a G5 region. Positions 207 to 284 (LGEELPYSVT…HLELWVKVKS (78 aa)) constitute a KH type-2 domain.

Belongs to the TRAFAC class TrmE-Era-EngA-EngB-Septin-like GTPase superfamily. Era GTPase family. As to quaternary structure, monomer.

The protein localises to the cytoplasm. It localises to the cell inner membrane. In terms of biological role, an essential GTPase that binds both GDP and GTP, with rapid nucleotide exchange. Plays a role in 16S rRNA processing and 30S ribosomal subunit biogenesis and possibly also in cell cycle regulation and energy metabolism. This Yersinia enterocolitica serotype O:8 / biotype 1B (strain NCTC 13174 / 8081) protein is GTPase Era.